A 195-amino-acid chain; its full sequence is ATP-dependent Clp protease proteolytic subunit 2 (195 aa).

Catalysis depends on serine 98, which acts as the Nucleophile. Residue histidine 123 is part of the active site.

This sequence belongs to the peptidase S14 family. Fourteen ClpP subunits assemble into 2 heptameric rings which stack back to back to give a disk-like structure with a central cavity, resembling the structure of eukaryotic proteasomes.

The protein localises to the cytoplasm. The catalysed reaction is Hydrolysis of proteins to small peptides in the presence of ATP and magnesium. alpha-casein is the usual test substrate. In the absence of ATP, only oligopeptides shorter than five residues are hydrolyzed (such as succinyl-Leu-Tyr-|-NHMec, and Leu-Tyr-Leu-|-Tyr-Trp, in which cleavage of the -Tyr-|-Leu- and -Tyr-|-Trp bonds also occurs).. Its function is as follows. Cleaves peptides in various proteins in a process that requires ATP hydrolysis. Has a chymotrypsin-like activity. Plays a major role in the degradation of misfolded proteins. This Rhodopirellula baltica (strain DSM 10527 / NCIMB 13988 / SH1) protein is ATP-dependent Clp protease proteolytic subunit 2.